A 209-amino-acid chain; its full sequence is Na(+)-translocating NADH-quinone reductase subunit D (209 aa).

Helical transmembrane passes span 42-62 (LVMT…ISLI), 70-90 (VRII…DQIL), 103-123 (VFVG…AYAM), 131-151 (FMDG…VGFV), and 178-198 (NGLF…IWGL).

It belongs to the NqrDE/RnfAE family. Composed of six subunits; NqrA, NqrB, NqrC, NqrD, NqrE and NqrF.

It is found in the cell inner membrane. It carries out the reaction a ubiquinone + n Na(+)(in) + NADH + H(+) = a ubiquinol + n Na(+)(out) + NAD(+). NQR complex catalyzes the reduction of ubiquinone-1 to ubiquinol by two successive reactions, coupled with the transport of Na(+) ions from the cytoplasm to the periplasm. NqrA to NqrE are probably involved in the second step, the conversion of ubisemiquinone to ubiquinol. This Yersinia enterocolitica serotype O:8 / biotype 1B (strain NCTC 13174 / 8081) protein is Na(+)-translocating NADH-quinone reductase subunit D.